A 353-amino-acid polypeptide reads, in one-letter code: Anthranilate phosphoribosyltransferase (353 aa).

Residues glycine 79, 82-83, threonine 87, 89-92, 107-115, and serine 119 each bind 5-phospho-alpha-D-ribose 1-diphosphate; these read GD, NIST, and KHGNHSFTS. Glycine 79 serves as a coordination point for anthranilate. Position 91 (serine 91) interacts with Mg(2+). Residue asparagine 110 coordinates anthranilate. An anthranilate-binding site is contributed by arginine 165. Mg(2+) contacts are provided by aspartate 223 and glutamate 224.

It belongs to the anthranilate phosphoribosyltransferase family. As to quaternary structure, homodimer. Requires Mg(2+) as cofactor.

It catalyses the reaction N-(5-phospho-beta-D-ribosyl)anthranilate + diphosphate = 5-phospho-alpha-D-ribose 1-diphosphate + anthranilate. Its pathway is amino-acid biosynthesis; L-tryptophan biosynthesis; L-tryptophan from chorismate: step 2/5. Functionally, catalyzes the transfer of the phosphoribosyl group of 5-phosphorylribose-1-pyrophosphate (PRPP) to anthranilate to yield N-(5'-phosphoribosyl)-anthranilate (PRA). The chain is Anthranilate phosphoribosyltransferase from Methanococcoides burtonii (strain DSM 6242 / NBRC 107633 / OCM 468 / ACE-M).